The following is a 255-amino-acid chain: Homeobox-leucine zipper protein ATHB-23 (255 aa).

The segment at residues 68–127 is a DNA-binding region (homeobox); sequence MGEKKRRLNMEQLKALEKDFELGNKLESDRKLELARALGLQPRQIAIWFQNRRARSKTKQ. The leucine-zipper stretch occupies residues 128 to 163; sequence LEKDYDMLKRQFESLRDENEVLQTQNQKLQAQVMAL.

This sequence belongs to the HD-ZIP homeobox family. Class I subfamily. Expressed in young leaves, in the adaxial domain of leaf primordia and the rib meristem. Expressed in the styles of flowers and siliques.

It localises to the nucleus. Functionally, probable transcription factor. This is Homeobox-leucine zipper protein ATHB-23 (ATHB-23) from Arabidopsis thaliana (Mouse-ear cress).